A 197-amino-acid polypeptide reads, in one-letter code: dTTP/UTP pyrophosphatase (197 aa).

Asp-70 acts as the Proton acceptor in catalysis.

It belongs to the Maf family. YhdE subfamily. A divalent metal cation serves as cofactor.

The protein localises to the cytoplasm. The enzyme catalyses dTTP + H2O = dTMP + diphosphate + H(+). The catalysed reaction is UTP + H2O = UMP + diphosphate + H(+). Nucleoside triphosphate pyrophosphatase that hydrolyzes dTTP and UTP. May have a dual role in cell division arrest and in preventing the incorporation of modified nucleotides into cellular nucleic acids. This is dTTP/UTP pyrophosphatase from Pectobacterium atrosepticum (strain SCRI 1043 / ATCC BAA-672) (Erwinia carotovora subsp. atroseptica).